The sequence spans 392 residues: Putative glutamate--cysteine ligase 2 (392 aa).

The interval alanine 347–valine 367 is disordered.

Belongs to the glutamate--cysteine ligase type 2 family. YbdK subfamily.

The enzyme catalyses L-cysteine + L-glutamate + ATP = gamma-L-glutamyl-L-cysteine + ADP + phosphate + H(+). In terms of biological role, ATP-dependent carboxylate-amine ligase which exhibits weak glutamate--cysteine ligase activity. This chain is Putative glutamate--cysteine ligase 2, found in Corynebacterium jeikeium (strain K411).